A 341-amino-acid polypeptide reads, in one-letter code: N-acetyl-gamma-glutamyl-phosphate reductase (341 aa).

C147 is an active-site residue.

This sequence belongs to the NAGSA dehydrogenase family. Type 1 subfamily.

The protein localises to the cytoplasm. The catalysed reaction is N-acetyl-L-glutamate 5-semialdehyde + phosphate + NADP(+) = N-acetyl-L-glutamyl 5-phosphate + NADPH + H(+). It participates in amino-acid biosynthesis; L-arginine biosynthesis; N(2)-acetyl-L-ornithine from L-glutamate: step 3/4. Functionally, catalyzes the NADPH-dependent reduction of N-acetyl-5-glutamyl phosphate to yield N-acetyl-L-glutamate 5-semialdehyde. The protein is N-acetyl-gamma-glutamyl-phosphate reductase of Dehalococcoides mccartyi (strain CBDB1).